We begin with the raw amino-acid sequence, 513 residues long: Alpha,alpha-trehalose-phosphate synthase [UDP-forming] (513 aa).

At tyrosine 40 the chain carries Phosphotyrosine. Residues tyrosine 104 and aspartate 158 each coordinate D-glucose 6-phosphate. UDP-binding residues include arginine 294 and lysine 299. The UDP-alpha-D-glucose site is built by arginine 294 and lysine 299. A D-glucose 6-phosphate-binding site is contributed by arginine 332. 393–401 serves as a coordination point for UDP-alpha-D-glucose; sequence DGMNLVSYE. Position 397-401 (397-401) interacts with UDP; sequence LVSYE. Serine 503 carries the post-translational modification Phosphoserine.

This sequence belongs to the glycosyltransferase 20 family. In terms of assembly, homomer. Component of the trehalose synthase complex that contains at least tps1, ntp1 and tpp1. Interacts with tpp1. Interacts with ntp1; the interaction is independent of stress conditions.

Its subcellular location is the cytoplasm. It localises to the nucleus. The catalysed reaction is D-glucose 6-phosphate + UDP-alpha-D-glucose = alpha,alpha-trehalose 6-phosphate + UDP + H(+). It participates in carbohydrate biosynthesis. Synthase catalytic subunit of the trehalose synthase complex that catalyzes the production of trehalose from glucose-6-phosphate and UDP-alpha-D-glucose in a two step process. The disaccharide trehalose serves as a storage carbohydrate that is mobilized during nutrient stress and spore germination. Together with ntp1, regulates the level of trehalose as a protectant for cell integrity during thermal and osmotic stress. The chain is Alpha,alpha-trehalose-phosphate synthase [UDP-forming] from Schizosaccharomyces pombe (strain 972 / ATCC 24843) (Fission yeast).